The sequence spans 304 residues: Aspartate carbamoyltransferase catalytic subunit (304 aa).

The carbamoyl phosphate site is built by Arg-49 and Thr-50. Lys-77 contacts L-aspartate. Carbamoyl phosphate-binding residues include Arg-99, His-127, and Gln-130. Positions 160 and 211 each coordinate L-aspartate. Carbamoyl phosphate is bound by residues Ala-252 and Pro-253.

It belongs to the aspartate/ornithine carbamoyltransferase superfamily. ATCase family. As to quaternary structure, heterododecamer (2C3:3R2) of six catalytic PyrB chains organized as two trimers (C3), and six regulatory PyrI chains organized as three dimers (R2).

The enzyme catalyses carbamoyl phosphate + L-aspartate = N-carbamoyl-L-aspartate + phosphate + H(+). It functions in the pathway pyrimidine metabolism; UMP biosynthesis via de novo pathway; (S)-dihydroorotate from bicarbonate: step 2/3. Functionally, catalyzes the condensation of carbamoyl phosphate and aspartate to form carbamoyl aspartate and inorganic phosphate, the committed step in the de novo pyrimidine nucleotide biosynthesis pathway. The protein is Aspartate carbamoyltransferase catalytic subunit of Bacillus cytotoxicus (strain DSM 22905 / CIP 110041 / 391-98 / NVH 391-98).